The following is a 431-amino-acid chain: Elongation factor 1-gamma (431 aa).

Residues 2–84 (VKGTLYTYPE…LLANEQLRGG (83 aa)) form the GST N-terminal domain. The region spanning 86 to 212 (CPFVQAQVQQ…YKLCEKALVF (127 aa)) is the GST C-terminal domain. The tract at residues 223–261 (KTGAAKPQQQAQQQKQEKKPKEKKEAPKKAAEPAEELDA) is disordered. Residues 226–236 (AAKPQQQAQQQ) show a composition bias toward low complexity. Positions 237–254 (KQEKKPKEKKEAPKKAAE) are enriched in basic and acidic residues. An EF-1-gamma C-terminal domain is found at 272 to 431 (SKDPFDALPK…RKFNQGKIFK (160 aa)). Ser-294 is subject to Phosphoserine.

In terms of assembly, interacts with microtubules. May interact with BicDR; the interaction is probably indirect. Interacts (via C-terminus) with Doa; the interaction is probably direct, is transient and leads to phosphorylation of eEF1gamma by Doa. EF-1 is composed of four subunits: alpha, beta, delta, and gamma. In terms of processing, phosphorylated on Ser-294 by LAMMER kinases, including Doa. Phosphorylation on Ser-294 by Doa is required for negative regulation of microtubule-based transport.

The protein resides in the cytoplasm. It localises to the nucleus. It is found in the cytoskeleton. In terms of biological role, microtubule binding protein involved in regulation of microtubule-based transport. Probably plays a role in anchoring the EF-1 complex to other cellular components. Probably involved in formation and/or development of mechanosensory organs during metamorphosis. Required for cellular and organismal viability. Not essential for the innate immune response to bacterial infection. In Drosophila melanogaster (Fruit fly), this protein is Elongation factor 1-gamma.